The chain runs to 1048 residues: Cysteine-rich motor neuron 1 protein (1048 aa).

Positions Met-1 to Ala-46 are cleaved as a signal peptide. An IGFBP N-terminal domain is found at Leu-47–Glu-124. Residues Leu-47–Ser-952 lie on the Extracellular side of the membrane. 4 disulfide bridges follow: Cys-49–Cys-72, Cys-52–Cys-74, Cys-57–Cys-75, and Cys-63–Cys-78. Asn-83 carries an N-linked (GlcNAc...) asparagine glycan. Intrachain disulfides connect Cys-86-Cys-102 and Cys-96-Cys-121. A Cell attachment site motif is present at residues Arg-326 to Asp-328. VWFC domains are found at residues Pro-346–Glu-403 and Ala-413–Glu-469. Antistasin-like domains lie at Cys-481–Cys-510, Cys-517–Cys-544, Cys-551–Cys-576, and Cys-579–Cys-604. Asn-486 is a glycosylation site (N-linked (GlcNAc...) asparagine). 2 VWFC domains span residues Gly-618–Pro-675 and Ser-689–Pro-747. The N-linked (GlcNAc...) asparagine glycan is linked to Asn-758. VWFC domains follow at residues Ser-763–Ile-821 and Val-829–Pro-886. A Cell attachment site motif is present at residues Arg-904 to Asp-906. Asn-913 is a glycosylation site (N-linked (GlcNAc...) asparagine). The chain crosses the membrane as a helical span at residues Val-953 to Ile-973. Residues Asn-974–Val-1048 are Cytoplasmic-facing.

Its subcellular location is the membrane. Its function is as follows. May play a role in CNS development by interacting with growth factors implicated in motor neuron differentiation and survival. In Gallus gallus (Chicken), this protein is Cysteine-rich motor neuron 1 protein (CRIM1).